Here is a 386-residue protein sequence, read N- to C-terminus: Prostacyclin receptor (386 aa).

The Extracellular segment spans residues 1–16; sequence MADSCRNLTYVRGSVG. Cystine bridges form between Cys-5/Cys-165 and Cys-92/Cys-170. An N-linked (GlcNAc...) asparagine glycan is attached at Asn-7. Residues 17–38 form a helical membrane-spanning segment; that stretch reads PATSTLMFVAGVVGNGLALGIL. Residues 39–51 are Cytoplasmic-facing; that stretch reads SARRPARPSAFAV. Residues 52-76 form a helical membrane-spanning segment; it reads LVTGLAATDLLGTSFLSPAVFVAYA. Over 77–94 the chain is Extracellular; it reads RNSSLLGLARGGPALCDA. The helical transmembrane segment at 95–115 threads the bilayer; sequence FAFAMTFFGLASMLILFAMAV. Residues 116–134 lie on the Cytoplasmic side of the membrane; sequence ERCLALSHPYLYAQLDGPR. The chain crosses the membrane as a helical span at residues 135–158; that stretch reads CARLALPAIYAFCVLFCALPLLGL. Over 159-181 the chain is Extracellular; the sequence is GQHQQYCPGSWCFLRMRWAQPGG. The chain crosses the membrane as a helical span at residues 182–208; sequence AAFSLAYAGLVALLVAAIFLCNGSVTL. Topologically, residues 209–235 are cytoplasmic; that stretch reads SLCRMYRQQKRHQGSLGPRPRTGEDEV. Residues 236-260 traverse the membrane as a helical segment; the sequence is DHLILLALMTVVMAVCSLPLTIRCF. The Extracellular portion of the chain corresponds to 261-274; that stretch reads TQAVAPDSSSEMGD. Residues 275–295 form a helical membrane-spanning segment; it reads LLAFRFYAFNPILDPWVFILF. Topologically, residues 296–386 are cytoplasmic; sequence RKAVFQRLKL…AEASVACSLC (91 aa). The disordered stretch occupies residues 322–376; it reads PLSQLASGRRDPRAPSAPVGKEGSCVPLSAWGEGQVEPLPPTQQSSGSAVGTSSK. Residues 363-376 are compositionally biased toward polar residues; the sequence is TQQSSGSAVGTSSK. Position 383 is a cysteine methyl ester (Cys-383). The S-farnesyl cysteine moiety is linked to residue Cys-383. Residues 384–386 constitute a propeptide, removed in mature form; that stretch reads SLC.

It belongs to the G-protein coupled receptor 1 family. Interacts (non-isoprenylated C-terminus) with PDZK1. In terms of processing, isoprenylation does not influence ligand binding but is required for efficient coupling to the effectors adenylyl cyclase and phospholipase C.

The protein resides in the cell membrane. Its function is as follows. Receptor for prostacyclin (prostaglandin I2 or PGI2). The activity of this receptor is mediated by G(s) proteins which activate adenylate cyclase. In Homo sapiens (Human), this protein is Prostacyclin receptor (PTGIR).